The following is a 420-amino-acid chain: Histidine--tRNA ligase (420 aa).

This sequence belongs to the class-II aminoacyl-tRNA synthetase family. In terms of assembly, homodimer.

It is found in the cytoplasm. The catalysed reaction is tRNA(His) + L-histidine + ATP = L-histidyl-tRNA(His) + AMP + diphosphate + H(+). This Anaplasma phagocytophilum (strain HZ) protein is Histidine--tRNA ligase.